The chain runs to 79 residues: Small ribosomal subunit protein uS17 (79 aa).

Belongs to the universal ribosomal protein uS17 family. Part of the 30S ribosomal subunit.

In terms of biological role, one of the primary rRNA binding proteins, it binds specifically to the 5'-end of 16S ribosomal RNA. This is Small ribosomal subunit protein uS17 from Rhizobium leguminosarum bv. trifolii (strain WSM2304).